We begin with the raw amino-acid sequence, 133 residues long: p53 and DNA damage-regulated protein 1 (133 aa).

This sequence belongs to the prefoldin subunit beta family. Component of the PAQosome complex which is responsible for the biogenesis of several protein complexes and which consists of R2TP complex members RUVBL1, RUVBL2, RPAP3 and PIH1D1, URI complex members PFDN2, PFDN6, PDRG1, UXT and URI1 as well as ASDURF, POLR2E and DNAAF10/WDR92. In terms of tissue distribution, predominantly expressed in normal testis and exhibits reduced but detectable expression in other organs.

The protein localises to the cytoplasm. May play a role in chaperone-mediated protein folding. This is p53 and DNA damage-regulated protein 1 (PDRG1) from Homo sapiens (Human).